The chain runs to 320 residues: BTB and MATH domain-containing protein 36 (320 aa).

The 130-residue stretch at 7–136 folds into the MATH domain; it reads KGSIRFEIQN…DKHAVLEVQI (130 aa). Residues 160–227 enclose the BTB domain; the sequence is TDVVLVLEGK…IYPTHMLINS (68 aa).

This chain is BTB and MATH domain-containing protein 36 (bath-36), found in Caenorhabditis elegans.